We begin with the raw amino-acid sequence, 300 residues long: N-acetylmuramic acid 6-phosphate etherase (300 aa).

Positions 57–220 (ITHAFAHGGR…TSGAMIRSGK (164 aa)) constitute an SIS domain. Glu85 acts as the Proton donor in catalysis. Glu116 is an active-site residue.

The protein belongs to the GCKR-like family. MurNAc-6-P etherase subfamily. As to quaternary structure, homodimer.

The enzyme catalyses N-acetyl-D-muramate 6-phosphate + H2O = N-acetyl-D-glucosamine 6-phosphate + (R)-lactate. The protein operates within amino-sugar metabolism; 1,6-anhydro-N-acetylmuramate degradation. It functions in the pathway amino-sugar metabolism; N-acetylmuramate degradation. It participates in cell wall biogenesis; peptidoglycan recycling. In terms of biological role, specifically catalyzes the cleavage of the D-lactyl ether substituent of MurNAc 6-phosphate, producing GlcNAc 6-phosphate and D-lactate. Together with AnmK, is also required for the utilization of anhydro-N-acetylmuramic acid (anhMurNAc) either imported from the medium or derived from its own cell wall murein, and thus plays a role in cell wall recycling. The polypeptide is N-acetylmuramic acid 6-phosphate etherase (Vibrio vulnificus (strain CMCP6)).